A 494-amino-acid polypeptide reads, in one-letter code: Neuronal acetylcholine receptor subunit alpha-6 (494 aa).

A signal peptide spans 1–25 (MLTSKGQGFLHGGLCLWLCVFTPFF). At 26-239 (KGCVGCATEE…ITYSFYIRRL (214 aa)) the chain is on the extracellular side. 2 N-linked (GlcNAc...) asparagine glycosylation sites follow: Asn54 and Asn171. 2 disulfides stabilise this stretch: Cys158–Cys172 and Cys222–Cys223. 3 helical membrane-spanning segments follow: residues 240–264 (PMFYTINLIIPCLFISFLTVLVFYL), 272–290 (VTLCISVLLSLTVFLLVIT), and 306–327 (YLLFTMIFVTLSIVVTVFVLNI). At 328 to 465 (HYRTPTTHTM…WKYVAMVVDR (138 aa)) the chain is on the cytoplasmic side. Position 401 is a phosphoserine (Ser401). A helical transmembrane segment spans residues 466-484 (VFLWVFIIVCVFGTAGLFL).

The protein belongs to the ligand-gated ion channel (TC 1.A.9) family. Acetylcholine receptor (TC 1.A.9.1) subfamily. Alpha-6/CHRNA6 sub-subfamily. As to quaternary structure, neuronal AChR is composed of two different types of subunits: alpha and non-alpha (beta). CHRNA6/alpha-6 subunit can be combined to CHRNB2/beta-2, CHRNA4/alpha-4 and CHRNB3/beta-3 to give rise to functional receptors. Heteropentamers containing CHRNB3 have an stoichiometry of (CHRNA6:CHRNB2)2:CHRNB3. Interacts with LYPD6.

It is found in the synaptic cell membrane. It catalyses the reaction Ca(2+)(in) = Ca(2+)(out). The enzyme catalyses K(+)(in) = K(+)(out). The catalysed reaction is Na(+)(in) = Na(+)(out). Activated by a myriad of ligands such as acetylcholine, cytisine and nicotine. CHRNA6 nAChR activity is inhibited by the antagonists alpha-conotoxin MII and PIA, a small disulfide-constrained peptides from cone snails. Its function is as follows. Component of neuronal acetylcholine receptors (nAChRs) that function as pentameric, ligand-gated cation channels with high calcium permeability among other activities. nAChRs are excitatory neurotrasnmitter receptors formed by a collection of nAChR subunits known to mediate synaptic transmission in the nervous system and the neuromuscular junction. Each nAchR subunit confers differential attributes to channel properties, including activation, deactivation and desensitization kinetics, pH sensitivity, cation permeability, and binding to allosteric modulators. CHRNA6 forms pentameric channels with CHRNB2, CHRNB3 and CHRNA4 that exhibit high sensitivity to ACh and nicotine and are predominantly expressed in only a few brain areas, including dopaminergic neurons, norepirephrine neurons and cells of the visual system. nAChrs containing CHRNA6 subunits mediate endogenous cholinergic modulation of dopamine and gamma-aminobutyric acid (GABA) release in response to nicotine at nerve terminals. In Pan troglodytes (Chimpanzee), this protein is Neuronal acetylcholine receptor subunit alpha-6 (CHRNA6).